The chain runs to 652 residues: Aspartate--tRNA ligase, mitochondrial (652 aa).

The transit peptide at 1-46 (MYLGSWLNRLGRGLSRPIGKTKQPIWGSLSRSLTLSSQRVPEFSSF) directs the protein to the mitochondrion. Position 218 is a phosphothreonine (Thr218). Ser241 carries the phosphoserine modification. The aspartate stretch occupies residues 243 to 246 (QQFK). Arg265 lines the L-aspartate pocket. Residues 265–267 (RDE) and Glu534 each bind ATP. An L-aspartate-binding site is contributed by Arg541. ATP is bound at residue 583–586 (GLDR).

Belongs to the class-II aminoacyl-tRNA synthetase family. Type 1 subfamily. Homodimer.

Its subcellular location is the mitochondrion matrix. It is found in the mitochondrion membrane. It catalyses the reaction tRNA(Asp) + L-aspartate + ATP = L-aspartyl-tRNA(Asp) + AMP + diphosphate. Catalyzes the attachment of aspartate to tRNA(Asp) in a two-step reaction: aspartate is first activated by ATP to form Asp-AMP and then transferred to the acceptor end of tRNA(Asp). This is Aspartate--tRNA ligase, mitochondrial (Dars2) from Rattus norvegicus (Rat).